The chain runs to 222 residues: 7-cyano-7-deazaguanine synthase (222 aa).

Residue 8-18 coordinates ATP; that stretch reads LSGGLDSATCL. Zn(2+) contacts are provided by C187, C197, C200, and C203.

It belongs to the QueC family. Zn(2+) is required as a cofactor.

The catalysed reaction is 7-carboxy-7-deazaguanine + NH4(+) + ATP = 7-cyano-7-deazaguanine + ADP + phosphate + H2O + H(+). Its pathway is purine metabolism; 7-cyano-7-deazaguanine biosynthesis. Catalyzes the ATP-dependent conversion of 7-carboxy-7-deazaguanine (CDG) to 7-cyano-7-deazaguanine (preQ(0)). The protein is 7-cyano-7-deazaguanine synthase of Alcanivorax borkumensis (strain ATCC 700651 / DSM 11573 / NCIMB 13689 / SK2).